A 156-amino-acid polypeptide reads, in one-letter code: Small ribosomal subunit protein uS7c (156 aa).

This sequence belongs to the universal ribosomal protein uS7 family. In terms of assembly, part of the 30S ribosomal subunit.

It is found in the plastid. The protein resides in the chloroplast. Its function is as follows. One of the primary rRNA binding proteins, it binds directly to 16S rRNA where it nucleates assembly of the head domain of the 30S subunit. The chain is Small ribosomal subunit protein uS7c (rps7) from Cyanidium caldarium (Red alga).